Here is a 522-residue protein sequence, read N- to C-terminus: Glycerol kinase (522 aa).

Thr15 contacts substrate. Residue Arg19 participates in ATP binding. Substrate-binding positions include 89–90, Tyr143, and 255–256; these read RE and DQ. Residues Thr276, Gly321, and 430-434 contribute to the ATP site; that span reads GATAN.

This sequence belongs to the FGGY kinase family. Highly expressed in germinating seeds and senescent leaves, and at lower levels in roots, leaves, flowers and siliques.

The protein localises to the cytoplasm. It is found in the cytosol. The catalysed reaction is glycerol + ATP = sn-glycerol 3-phosphate + ADP + H(+). It functions in the pathway polyol metabolism; glycerol degradation via glycerol kinase pathway; sn-glycerol 3-phosphate from glycerol: step 1/1. Functionally, key enzyme in the regulation of glycerol uptake and metabolism. Required for resistance to nonhost Pseudomonas bacteria and to the pathogenic fungus B.cinerea. The sequence is that of Glycerol kinase (GLPK) from Arabidopsis thaliana (Mouse-ear cress).